We begin with the raw amino-acid sequence, 602 residues long: Alpha-glucosides permease MPH3 (602 aa).

At 1 to 106 (MKNLSFLINR…AAAWSLLVST (106 aa)) the chain is on the cytoplasmic side. A helical transmembrane segment spans residues 107 to 127 (TLIMEGYDTAILGAFYALPIF). Residues 128 to 142 (QRKFGSQNDKTGEWE) are Extracellular-facing. A helical membrane pass occupies residues 143-163 (ISASWQIGLTLCYMAGEIVGL). The Cytoplasmic segment spans residues 164 to 178 (QLTGPSVDLVGNRYT). Residues 179 to 199 (LIIALFFLAAFTFILYFCNSL) traverse the membrane as a helical segment. Gly200 is a topological domain (extracellular). Residues 201–221 (MIAVGQALCGMPWGCFQCLTV) form a helical membrane-spanning segment. The Cytoplasmic portion of the chain corresponds to 222–234 (SYASEICPLALRY). The chain crosses the membrane as a helical span at residues 235–255 (YLTTYSNLCWLFGQLFAAGIM). Topologically, residues 256–270 (KNSQKKYADSELGYK) are extracellular. Residues 271-291 (LPFALQWILPVPLALGIFFAP) traverse the membrane as a helical segment. The Cytoplasmic portion of the chain corresponds to 292-363 (ESPWWLVKKG…EDKINRRRTR (72 aa)). A helical transmembrane segment spans residues 364-384 (ITCLCWAGQATCGSILIGYST). At 385–397 (YFYEKAGVSTEMS) the chain is on the extracellular side. The chain crosses the membrane as a helical span at residues 398–418 (FTFSIIQYCLGICATFLSWWA). The Cytoplasmic segment spans residues 419–426 (SKYFGRYD). A helical transmembrane segment spans residues 427 to 447 (LYAFGLAFQTIVFFIIGGLGC). The Extracellular segment spans residues 448-459 (SSTHGSKMGSGS). The chain crosses the membrane as a helical span at residues 460–480 (LLMAVAFFYNLGIAPVVFCLV). Topologically, residues 481–492 (SEMPSSRLRTKT) are cytoplasmic. The chain crosses the membrane as a helical span at residues 493 to 513 (IILARNTYNVVSIICSVLILY). Over 514–525 (QLNSKKWNWGAK) the chain is Extracellular. Residues 526-546 (SGFFWGVLCFCTLIWAVVDLP) traverse the membrane as a helical segment. Residues 547–602 (ETAGKTFVEINELFKLGVSARKFKSTKVDPFVVKTPPKDVSHNDPKGDIEASIAEE) are Cytoplasmic-facing. Residues 582 to 595 (PPKDVSHNDPKGDI) are compositionally biased toward basic and acidic residues. The segment at 582–602 (PPKDVSHNDPKGDIEASIAEE) is disordered.

The protein belongs to the major facilitator superfamily. Sugar transporter (TC 2.A.1.1) family.

Its subcellular location is the cell membrane. High-affinity uptake of maltose and maltotriose. Also transports alpha-methylglucoside, glucose and turanose but not melezitose or trehalose. The polypeptide is Alpha-glucosides permease MPH3 (MPH3) (Saccharomyces cerevisiae (strain ATCC 204508 / S288c) (Baker's yeast)).